Reading from the N-terminus, the 417-residue chain is UDP-N-acetylglucosamine 1-carboxyvinyltransferase (417 aa).

22 to 23 (KN) serves as a coordination point for phosphoenolpyruvate. UDP-N-acetyl-alpha-D-glucosamine is bound at residue Arg-92. The Proton donor role is filled by Cys-116. The residue at position 116 (Cys-116) is a 2-(S-cysteinyl)pyruvic acid O-phosphothioketal. Residues Asp-304 and Val-326 each contribute to the UDP-N-acetyl-alpha-D-glucosamine site.

This sequence belongs to the EPSP synthase family. MurA subfamily.

It is found in the cytoplasm. It carries out the reaction phosphoenolpyruvate + UDP-N-acetyl-alpha-D-glucosamine = UDP-N-acetyl-3-O-(1-carboxyvinyl)-alpha-D-glucosamine + phosphate. Its pathway is cell wall biogenesis; peptidoglycan biosynthesis. Cell wall formation. Adds enolpyruvyl to UDP-N-acetylglucosamine. This is UDP-N-acetylglucosamine 1-carboxyvinyltransferase from Syntrophotalea carbinolica (strain DSM 2380 / NBRC 103641 / GraBd1) (Pelobacter carbinolicus).